The following is a 128-amino-acid chain: UPF0325 protein CKO_03204 (128 aa).

This sequence belongs to the UPF0325 family.

The chain is UPF0325 protein CKO_03204 from Citrobacter koseri (strain ATCC BAA-895 / CDC 4225-83 / SGSC4696).